A 765-amino-acid polypeptide reads, in one-letter code: Zinc finger and BTB domain-containing protein 49 (765 aa).

In terms of domain architecture, BTB spans 25 to 91 (CDCMLVVKGV…MYTSHLDLNQ (67 aa)). Disordered regions lie at residues 165–203 (QQNK…GSCT) and 275–294 (NFLA…DATC). 7 consecutive C2H2-type zinc fingers follow at residues 395–417 (YACE…KRSH), 423–445 (FECN…LRRH), 451–473 (YICE…IIIH), 479–501 (HLCD…KKTH), 507–529 (FTCD…RIRH), 535–557 (YSCS…VRTH), and 563–585 (YTCE…KKMH).

The protein belongs to the krueppel C2H2-type zinc-finger protein family. As to quaternary structure, isoform 1 interacts with EP300 and KAT5/Tip60. The interaction with EP300 is direct and leads to synergistic induction of CDKN1A. On the CDKN1A promoter, forms a complex with ZBTB17/Miz-1; this interaction leads to additive CDKN1A transactivation. Isoform 3 also interacts with ZBTB17; this interaction may block ZBTB17 repressor activity. In terms of tissue distribution, highly expressed in normal epidermis and in other epithelial tissues, including in colon and lung. Tends to be down-regulated in colon, lung and skin cancer tissues.

It localises to the cytoplasm. It is found in the nucleus. Its function is as follows. Transcription factor. Inhibits cell proliferation by activating either CDKN1A/p21 transcription or RB1 transcription. In terms of biological role, binds CDKN1A promoter and activates its transcription; this activity is further potentiated in the presence of EP300 (synergistic) and ZBTB17/Miz-1 (additive). Activates RB1 transcription most probably by antagonizing ZBTB17 repression of RB1. Does not bind directly RB1 promoter. This is Zinc finger and BTB domain-containing protein 49 (ZBTB49) from Homo sapiens (Human).